The primary structure comprises 306 residues: Methionyl-tRNA formyltransferase (306 aa).

110 to 113 provides a ligand contact to (6S)-5,6,7,8-tetrahydrofolate; it reads SLLP.

Belongs to the Fmt family.

The enzyme catalyses L-methionyl-tRNA(fMet) + (6R)-10-formyltetrahydrofolate = N-formyl-L-methionyl-tRNA(fMet) + (6S)-5,6,7,8-tetrahydrofolate + H(+). Attaches a formyl group to the free amino group of methionyl-tRNA(fMet). The formyl group appears to play a dual role in the initiator identity of N-formylmethionyl-tRNA by promoting its recognition by IF2 and preventing the misappropriation of this tRNA by the elongation apparatus. This Brucella suis (strain ATCC 23445 / NCTC 10510) protein is Methionyl-tRNA formyltransferase.